We begin with the raw amino-acid sequence, 172 residues long: 3-hydroxydecanoyl-[acyl-carrier-protein] dehydratase (172 aa).

Residue His71 is part of the active site.

It belongs to the thioester dehydratase family. FabA subfamily. In terms of assembly, homodimer.

It localises to the cytoplasm. The catalysed reaction is a (3R)-hydroxyacyl-[ACP] = a (2E)-enoyl-[ACP] + H2O. It carries out the reaction (3R)-hydroxydecanoyl-[ACP] = (2E)-decenoyl-[ACP] + H2O. The enzyme catalyses (2E)-decenoyl-[ACP] = (3Z)-decenoyl-[ACP]. The protein operates within lipid metabolism; fatty acid biosynthesis. Its function is as follows. Necessary for the introduction of cis unsaturation into fatty acids. Catalyzes the dehydration of (3R)-3-hydroxydecanoyl-ACP to E-(2)-decenoyl-ACP and then its isomerization to Z-(3)-decenoyl-ACP. Can catalyze the dehydratase reaction for beta-hydroxyacyl-ACPs with saturated chain lengths up to 16:0, being most active on intermediate chain length. The sequence is that of 3-hydroxydecanoyl-[acyl-carrier-protein] dehydratase from Aliivibrio fischeri (strain ATCC 700601 / ES114) (Vibrio fischeri).